A 410-amino-acid polypeptide reads, in one-letter code: D-3-phosphoglycerate dehydrogenase (410 aa).

NAD(+) contacts are provided by residues 161 to 162 (HI), Asp-181, 238 to 240 (ASR), and Asp-264. Arg-240 is a catalytic residue. Residue Glu-269 is part of the active site. The active-site Proton donor is the His-292. 292-295 (HIGG) provides a ligand contact to NAD(+). Residues 339–410 (RLMHIHENRP…PGTIRARLLY (72 aa)) form the ACT domain.

Belongs to the D-isomer specific 2-hydroxyacid dehydrogenase family. As to quaternary structure, homotetramer.

It catalyses the reaction (2R)-3-phosphoglycerate + NAD(+) = 3-phosphooxypyruvate + NADH + H(+). The catalysed reaction is (R)-2-hydroxyglutarate + NAD(+) = 2-oxoglutarate + NADH + H(+). It participates in amino-acid biosynthesis; L-serine biosynthesis; L-serine from 3-phospho-D-glycerate: step 1/3. In bacteria displays feedback inhibition by L-serine. Functionally, catalyzes the reversible oxidation of 3-phospho-D-glycerate to 3-phosphonooxypyruvate, the first step of the phosphorylated L-serine biosynthesis pathway. Also catalyzes the reversible oxidation of 2-hydroxyglutarate to 2-oxoglutarate. This Escherichia coli O6:H1 (strain CFT073 / ATCC 700928 / UPEC) protein is D-3-phosphoglycerate dehydrogenase (serA).